The following is a 200-amino-acid chain: Recombination protein RecR (200 aa).

The C4-type zinc-finger motif lies at 57 to 72 (CRQCRTLTEQELCPQC). The Toprim domain occupies 80 to 175 (TQLCVVEGPV…TATRIAHGVP (96 aa)).

This sequence belongs to the RecR family.

Functionally, may play a role in DNA repair. It seems to be involved in an RecBC-independent recombinational process of DNA repair. It may act with RecF and RecO. The polypeptide is Recombination protein RecR (Pseudomonas entomophila (strain L48)).